A 357-amino-acid polypeptide reads, in one-letter code: 4-hydroxy-3-methylbut-2-en-1-yl diphosphate synthase (flavodoxin) (357 aa).

The [4Fe-4S] cluster site is built by Cys264, Cys267, Cys299, and Glu306.

It belongs to the IspG family. [4Fe-4S] cluster is required as a cofactor.

The enzyme catalyses (2E)-4-hydroxy-3-methylbut-2-enyl diphosphate + oxidized [flavodoxin] + H2O + 2 H(+) = 2-C-methyl-D-erythritol 2,4-cyclic diphosphate + reduced [flavodoxin]. It functions in the pathway isoprenoid biosynthesis; isopentenyl diphosphate biosynthesis via DXP pathway; isopentenyl diphosphate from 1-deoxy-D-xylulose 5-phosphate: step 5/6. Converts 2C-methyl-D-erythritol 2,4-cyclodiphosphate (ME-2,4cPP) into 1-hydroxy-2-methyl-2-(E)-butenyl 4-diphosphate. This is 4-hydroxy-3-methylbut-2-en-1-yl diphosphate synthase (flavodoxin) from Campylobacter jejuni (strain RM1221).